The following is a 54-amino-acid chain: Photosystem II reaction center protein L (54 aa).

A helical membrane pass occupies residues 33-53 (SLFWGLLLIFVLAVLFSSYIF).

Belongs to the PsbL family. PSII is composed of 1 copy each of membrane proteins PsbA, PsbB, PsbC, PsbD, PsbE, PsbF, PsbH, PsbI, PsbJ, PsbK, PsbL, PsbM, PsbT, PsbX, PsbY, PsbZ, Psb30/Ycf12, at least 3 peripheral proteins of the oxygen-evolving complex and a large number of cofactors. It forms dimeric complexes.

The protein localises to the plastid. The protein resides in the chloroplast thylakoid membrane. In terms of biological role, one of the components of the core complex of photosystem II (PSII). PSII is a light-driven water:plastoquinone oxidoreductase that uses light energy to abstract electrons from H(2)O, generating O(2) and a proton gradient subsequently used for ATP formation. It consists of a core antenna complex that captures photons, and an electron transfer chain that converts photonic excitation into a charge separation. This subunit is found at the monomer-monomer interface and is required for correct PSII assembly and/or dimerization. The protein is Photosystem II reaction center protein L of Stigeoclonium helveticum (Green alga).